The chain runs to 1009 residues: Glutamate receptor ionotropic, delta-1 (1009 aa).

The N-terminal stretch at 1–20 (MEALTLWLLPWICQCVTVRA) is a signal peptide. An interaction with CBLN1 region spans residues 21–436 (DSIIHIGAIF…ERPMGSRLQG (416 aa)). Residues 21–562 (DSIIHIGAIF…SIFSLFAPFD (542 aa)) lie on the Extracellular side of the membrane. Intrachain disulfides connect Cys-80–Cys-351, Cys-96–Cys-128, and Cys-294–Cys-306. N-linked (GlcNAc...) asparagine glycans are attached at residues Asn-131 and Asn-200. N-linked (GlcNAc...) asparagine glycans are attached at residues Asn-422 and Asn-498. Ca(2+) contacts are provided by Glu-527, Val-530, and Asp-531. A helical membrane pass occupies residues 563-583 (FAVWACIAAAIPVVGVLIFVL). Residues 584–637 (NRIQAVRSQSATQPRPSASATLHSAIWIVYGAFVQQGGESSVNSVAMRIVMGSW) lie on the Cytoplasmic side of the membrane. A helical membrane pass occupies residues 638 to 658 (WLFTLIVCSSYTANLAAFLTV). Residues 659–830 (SRMDNPIRTF…TEGKSLKLHS (172 aa)) are Extracellular-facing. Ca(2+)-binding residues include Asp-753, Asp-755, and Ser-757. A helical membrane pass occupies residues 831 to 851 (FAGVFCILAIGLLLACLVAAL). The Cytoplasmic portion of the chain corresponds to 852–1009 (ELWWNSNRCH…ALDTSHGTSI (158 aa)). Over residues 931-942 (LPEQSSHGTSRT) the composition is skewed to polar residues. The interval 931 to 960 (LPEQSSHGTSRTLSSGPSSNLPLPLSSSAT) is disordered. A compositionally biased stretch (low complexity) spans 943–958 (LSSGPSSNLPLPLSSS).

This sequence belongs to the glutamate-gated ion channel (TC 1.A.10.1) family. GRID1 subfamily. As to quaternary structure, homodimer. Interacts (via extracellular N-terminal domain) with CBLN1 (via C1q domain), and more weakly with CBLN2; the interactions mediate the trans-synaptic adhesion complexes also with neurexins and are required for ligand-gated cation channel activity. In terms of tissue distribution, equally in forebrain and cerebellum.

It localises to the postsynaptic cell membrane. The enzyme catalyses Ca(2+)(in) = Ca(2+)(out). It carries out the reaction Na(+)(in) = Na(+)(out). Functionally, member of the ionotropic glutamate receptor family, which plays a crucial role in synaptic organization and signal transduction in the central nervous system. Although it shares structural features with ionotropic glutamate receptors, does not bind glutamate as a primary ligand. Instead, forms trans-synaptic adhesion complexes with presynaptic neurexins and cerebellins, regulating NMDA and AMPA receptor activity and influencing synaptic plasticity through signal transduction. In the presence of NRX1B-CBLN1, forms cation-selective channels that are proposed to be gated by glycine and D-serine. However, recent research disputes this ligand-gated cation channel activity. Cation-selective ion channel can be triggered by GRM1 in dopaminergic neurons. Also acts as a receptor for GABA, modulating inhibitory synaptic plasticity through non-ionotropic mechanisms. The protein is Glutamate receptor ionotropic, delta-1 (Grid1) of Mus musculus (Mouse).